A 357-amino-acid polypeptide reads, in one-letter code: U3 small nucleolar ribonucleoprotein protein LCP5 (357 aa).

Ser2 is subject to N-acetylserine. 2 disordered regions span residues 146–211 and 301–357; these read STLV…YKPP and NKAE…QRRL. Acidic residues predominate over residues 155–166; it reads DDSEDDESSEDE. A compositionally biased stretch (polar residues) spans 171–183; it reads PNTSGIINTNKKS. 2 stretches are compositionally biased toward basic and acidic residues: residues 187-196 and 348-357; these read RVEETAKQEN and SAWDRAQRRL.

The protein resides in the nucleus. It localises to the nucleolus. Component of the U3 small nucleolar ribonucleoprotein. Required for the early cleavages at sites A0, A1 and A2 of the pre-ribosomal RNA. Participates in ribosome biogenesis. This chain is U3 small nucleolar ribonucleoprotein protein LCP5 (LCP5), found in Saccharomyces cerevisiae (strain ATCC 204508 / S288c) (Baker's yeast).